A 415-amino-acid chain; its full sequence is MKLMVKIALLTCGAEWSGVYHEIEKAAQKVGGELIFPEVDLSYIDEVEDRLGFKVGSANLKLMFARAMSIIEGNTDAEAVFIATCFRCAEGALVRNEVRKLIQQNTNLPVVMYSFTERTKASELLTRMEALTTIVERKSLLARKKQEGISLGIDSGSTTTKAVVMIDDEVAGTGWIYTKDVIESAKEAVNNALKEAGISLDQVETIGTTGYGRYTVGEYFKADLIQEELTVNSKGAAYLADKQEGEATVIDIGGMDNKAISLYDAIPDGFTMGGICAGASGRFFEITARRLGVSLQELGELAAKGDWRKIKMNSYCIVFGIQDLVTALAEGAKAEDVAAAAAHSVAEQVFEQQLQEVDVRDPVILVGGSSLLKGLVIAMEEVLGRKIIVPRYSQLIGAVGAALLSSGYRYKKMKA.

Residues Cys276 and Cys316 each coordinate [4Fe-4S] cluster.

In terms of assembly, homodimer. [4Fe-4S] cluster serves as cofactor.

This is an uncharacterized protein from Methanocaldococcus jannaschii (strain ATCC 43067 / DSM 2661 / JAL-1 / JCM 10045 / NBRC 100440) (Methanococcus jannaschii).